We begin with the raw amino-acid sequence, 239 residues long: uncharacterized protein (239 aa).

Helical transmembrane passes span 4 to 24, 29 to 49, 61 to 81, 84 to 104, 116 to 136, 139 to 159, 180 to 200, and 218 to 238; these read LIPK…LGMV, VIWH…VYPV, YQKW…ISVF, PPLI…MYFA, VAGV…GMGT, GWAW…SFYV, LLLP…AFIP, and IGIL…LFIT.

The protein to H.influenzae HI_1626.

The protein resides in the cell membrane. This is an uncharacterized protein from Bacillus subtilis (strain 168).